The chain runs to 114 residues: uncharacterized protein (114 aa).

This is an uncharacterized protein from Methanocaldococcus jannaschii (strain ATCC 43067 / DSM 2661 / JAL-1 / JCM 10045 / NBRC 100440) (Methanococcus jannaschii).